The sequence spans 399 residues: Phosphoglycerate kinase (399 aa).

Substrate is bound by residues 22-24 (DFN), R37, 60-63 (HFGR), R118, and R151. ATP contacts are provided by residues K201, E322, and 352 to 355 (GGDS).

This sequence belongs to the phosphoglycerate kinase family. Monomer.

It is found in the cytoplasm. It catalyses the reaction (2R)-3-phosphoglycerate + ATP = (2R)-3-phospho-glyceroyl phosphate + ADP. It participates in carbohydrate degradation; glycolysis; pyruvate from D-glyceraldehyde 3-phosphate: step 2/5. The sequence is that of Phosphoglycerate kinase from Wolbachia sp. subsp. Brugia malayi (strain TRS).